The chain runs to 242 residues: Dehydration-responsive element-binding protein 1J (242 aa).

The segment covering 20 to 29 (SSATTAATAT) has biased composition (low complexity). The disordered stretch occupies residues 20–44 (SSATTAATATGPASPKRPAGRTKFQ). Positions 50-109 (VFRGVRRRGRAGRWVCEVRVPGSRGDRLWVGTFDTAEEAARAHDAAMLAMCGASASLNFT) form a DNA-binding region, AP2/ERF. The disordered stretch occupies residues 143–184 (FQRRGSTAATATATSGDAASTAPPSSSPVLSPNDDNASSAST). Low complexity predominate over residues 148-184 (STAATATATSGDAASTAPPSSSPVLSPNDDNASSAST).

It belongs to the AP2/ERF transcription factor family. ERF subfamily.

It is found in the nucleus. Functionally, transcriptional activator that binds specifically to the DNA sequence 5'-[AG]CCGAC-3'. Binding to the C-repeat/DRE element mediates high salinity- and dehydration-inducible transcription. This Oryza sativa subsp. indica (Rice) protein is Dehydration-responsive element-binding protein 1J (DREB1J).